The chain runs to 298 residues: GTP cyclohydrolase FolE2 (298 aa).

It belongs to the GTP cyclohydrolase IV family.

The enzyme catalyses GTP + H2O = 7,8-dihydroneopterin 3'-triphosphate + formate + H(+). The protein operates within cofactor biosynthesis; 7,8-dihydroneopterin triphosphate biosynthesis; 7,8-dihydroneopterin triphosphate from GTP: step 1/1. Converts GTP to 7,8-dihydroneopterin triphosphate. The polypeptide is GTP cyclohydrolase FolE2 (Pseudomonas aeruginosa (strain UCBPP-PA14)).